A 140-amino-acid chain; its full sequence is Putative pre-16S rRNA nuclease (140 aa).

Belongs to the YqgF nuclease family.

It is found in the cytoplasm. Could be a nuclease involved in processing of the 5'-end of pre-16S rRNA. The sequence is that of Putative pre-16S rRNA nuclease from Parabacteroides distasonis (strain ATCC 8503 / DSM 20701 / CIP 104284 / JCM 5825 / NCTC 11152).